A 329-amino-acid chain; its full sequence is Endonuclease 8-like 2 (329 aa).

Pro-2 (schiff-base intermediate with DNA) is an active-site residue. The Proton donor role is filled by Glu-3. The active-site Proton donor; for beta-elimination activity is Lys-50. An N6-acetyllysine modification is found at Lys-50. Ser-68 is subject to Phosphoserine. Residues 88–112 (GPSAQEPSAGPSGSGEPVPSRSAET) form a disordered region. An N6-acetyllysine modification is found at Lys-150. Asn-227 is a binding site for DNA. Residues 280–316 (QIYQKEQCPSGHQVMKETFGPPDGLQRLTWWCPQCQP) form an FPG-type zinc finger. The active-site Proton donor; for delta-elimination activity is the Arg-306.

This sequence belongs to the FPG family. As to quaternary structure, binds EP300.

It localises to the nucleus. The catalysed reaction is 2'-deoxyribonucleotide-(2'-deoxyribose 5'-phosphate)-2'-deoxyribonucleotide-DNA = a 3'-end 2'-deoxyribonucleotide-(2,3-dehydro-2,3-deoxyribose 5'-phosphate)-DNA + a 5'-end 5'-phospho-2'-deoxyribonucleoside-DNA + H(+). With respect to regulation, acetylation of Lys-50 leads to loss of DNA nicking activity. In terms of biological role, involved in base excision repair of DNA damaged by oxidation or by mutagenic agents. Has DNA glycosylase activity towards 5-hydroxyuracil and other oxidized derivatives of cytosine with a preference for mismatched double-stranded DNA (DNA bubbles). Has low or no DNA glycosylase activity towards thymine glycol, 2-hydroxyadenine, hypoxanthine and 8-oxoguanine. Has AP (apurinic/apyrimidinic) lyase activity and introduces nicks in the DNA strand. Cleaves the DNA backbone by beta-delta elimination to generate a single-strand break at the site of the removed base with both 3'- and 5'-phosphates. The chain is Endonuclease 8-like 2 (Neil2) from Mus musculus (Mouse).